A 651-amino-acid polypeptide reads, in one-letter code: Beta-mannosyltransferase 7 (651 aa).

Topologically, residues 1-19 (MKLEMSSYLHKVPNTGITN) are cytoplasmic. The chain crosses the membrane as a helical span at residues 20–42 (LSNSKSIVFIMFCATLLFIITSS). At 43 to 651 (RYLTGSESLG…VKIDEKSEET (609 aa)) the chain is on the extracellular side. N-linked (GlcNAc...) asparagine glycans are attached at residues Asn271 and Asn423.

Belongs to the BMT family.

The protein resides in the membrane. Its function is as follows. Beta-mannosyltransferase involved in cell wall biosynthesis through beta-1,2-mannosylation of cell wall phosphopeptidomannan. The polypeptide is Beta-mannosyltransferase 7 (BMT7) (Candida albicans (strain SC5314 / ATCC MYA-2876) (Yeast)).